The primary structure comprises 348 residues: S-adenosylmethionine:tRNA ribosyltransferase-isomerase (348 aa).

This sequence belongs to the QueA family. In terms of assembly, monomer.

The protein resides in the cytoplasm. The enzyme catalyses 7-aminomethyl-7-carbaguanosine(34) in tRNA + S-adenosyl-L-methionine = epoxyqueuosine(34) in tRNA + adenine + L-methionine + 2 H(+). It functions in the pathway tRNA modification; tRNA-queuosine biosynthesis. Functionally, transfers and isomerizes the ribose moiety from AdoMet to the 7-aminomethyl group of 7-deazaguanine (preQ1-tRNA) to give epoxyqueuosine (oQ-tRNA). This is S-adenosylmethionine:tRNA ribosyltransferase-isomerase from Polynucleobacter asymbioticus (strain DSM 18221 / CIP 109841 / QLW-P1DMWA-1) (Polynucleobacter necessarius subsp. asymbioticus).